The primary structure comprises 132 residues: Small ribosomal subunit protein uS11 (132 aa).

It belongs to the universal ribosomal protein uS11 family. In terms of assembly, part of the 30S ribosomal subunit. Interacts with proteins S7 and S18. Binds to IF-3.

In terms of biological role, located on the platform of the 30S subunit, it bridges several disparate RNA helices of the 16S rRNA. Forms part of the Shine-Dalgarno cleft in the 70S ribosome. The sequence is that of Small ribosomal subunit protein uS11 from Chlamydia felis (strain Fe/C-56) (Chlamydophila felis).